Here is a 311-residue protein sequence, read N- to C-terminus: Methionyl-tRNA formyltransferase (311 aa).

A (6S)-5,6,7,8-tetrahydrofolate-binding site is contributed by 112–115 (SLLP).

It belongs to the Fmt family.

It catalyses the reaction L-methionyl-tRNA(fMet) + (6R)-10-formyltetrahydrofolate = N-formyl-L-methionyl-tRNA(fMet) + (6S)-5,6,7,8-tetrahydrofolate + H(+). Its function is as follows. Attaches a formyl group to the free amino group of methionyl-tRNA(fMet). The formyl group appears to play a dual role in the initiator identity of N-formylmethionyl-tRNA by promoting its recognition by IF2 and preventing the misappropriation of this tRNA by the elongation apparatus. This chain is Methionyl-tRNA formyltransferase, found in Bradyrhizobium diazoefficiens (strain JCM 10833 / BCRC 13528 / IAM 13628 / NBRC 14792 / USDA 110).